Here is an 859-residue protein sequence, read N- to C-terminus: MKGDSRHLNEEEGASGYEECIIVNGNFSDQSSDTKDAPSPPVLEAICTEPVCTPETRGRRSSSRLSKREVSSLLNYTQDMTGDGDRDDEVDDGNGSDILMPKLTRETKDTRTRSESPAVRTRHSNGTSSLERQRASPRITRGRQGRHHVQEYPVEFPATRSRRRRASSSASTPWSSPASVDFMEEVTPKSVSTPSVDLSQDGDQEGMDTTQVDAESRDGDSTEYQDDKEFGIGDLVWGKIKGFSWWPAMVVSWKATSKRQAMPGMRWVQWFGDGKFSEISADKLVALGLFSQHFNLATFNKLVSYRKAMYHTLEKARVRAGKTFSSSPGESLEDQLKPMLEWAHGGFKPTGIEGLKPNKKQPVVNKSKVRRSDSRNLEPRRRENKSRRRTTNDSAASESPPPKRLKTNSYGGKDRGEDEESRERMASEVTNNKGNLEDRCLSCGKKNPVSFHPLFEGGLCQSCRDRFLELFYMYDEDGYQSYCTVCCEGRELLLCSNTSCCRCFCVECLEVLVGAGTAEDAKLQEPWSCYMCLPQRCHGVLRRRKDWNMRLQDFFTTDPDLEEFEPPKLYPAIPAAKRRPIRVLSLFDGIATGYLVLKELGIKVEKYIASEVCAESIAVGTVKHEGQIKYVNDVRKITKKNIEEWGPFDLVIGGSPCNDLSNVNPARKGLYEGTGRLFFEFYHLLNYTRPKEGDNRPFFWMFENVVAMKVNDKKDISRFLACNPVMIDAIKVSAAHRARYFWGNLPGMNRPVMASKNDKLELQDCLEFSRTAKLKKVQTITTKSNSIRQGKNQLFPVVMNGKDDVLWCTELERIFGFPAHYTDVSNMGRGARQKLLGRSWSVPVIRHLFAPLKDYFACE.

The segment at 1–305 is interaction with DNMT1 and DNMT3A; sequence MKGDSRHLNE…LATFNKLVSY (305 aa). Residues 25-226 form a disordered region; that stretch reads GNFSDQSSDT…RDGDSTEYQD (202 aa). Residues 85–94 are compositionally biased toward acidic residues; the sequence is DRDDEVDDGN. Ser96 carries the post-translational modification Phosphoserine. Lys102 is covalently cross-linked (Glycyl lysine isopeptide (Lys-Gly) (interchain with G-Cter in SUMO2)). Over residues 103-114 the composition is skewed to basic and acidic residues; that stretch reads LTRETKDTRTRS. A Phosphothreonine modification is found at Thr112. Ser116 is subject to Phosphoserine. Positions 167-179 are enriched in low complexity; that stretch reads SSSASTPWSSPAS. The span at 189–198 shows a compositional bias: polar residues; sequence KSVSTPSVDL. The segment covering 214 to 226 has biased composition (basic and acidic residues); that stretch reads AESRDGDSTEYQD. Ser216 is subject to Phosphoserine. In terms of domain architecture, PWWP spans 232–290; the sequence is IGDLVWGKIKGFSWWPAMVVSWKATSKRQAMPGMRWVQWFGDGKFSEISADKLVALGLF. A disordered region spans residues 348–429; that stretch reads KPTGIEGLKP…ESRERMASEV (82 aa). Composition is skewed to basic and acidic residues over residues 370–381 and 412–426; these read RRSDSRNLEPRR and GKDR…ERMA. Arg415 is modified (citrulline). The region spanning 428–560 is the ADD domain; it reads EVTNNKGNLE…LQDFFTTDPD (133 aa). Residues 439 to 469 form a GATA-type; atypical zinc finger; sequence RCLSCGKKNPVSFHPLFEGGLCQSCRDRFLE. Positions 440–532 are interaction with the PRC2/EED-EZH2 complex; that stretch reads CLSCGKKNPV…LQEPWSCYMC (93 aa). The segment at 480–536 adopts a PHD-type; atypical zinc-finger fold; the sequence is QSYCTVCCEGRELLLCSNTSCCRCFCVECLEVLVGAGTAEDAKLQEPWSCYMCLPQR. The region spanning 581–859 is the SAM-dependent MTase C5-type domain; the sequence is IRVLSLFDGI…APLKDYFACE (279 aa). Residues 588–592 and Glu611 each bind S-adenosyl-L-methionine; that span reads DGIAT. A Glycyl lysine isopeptide (Lys-Gly) (interchain with G-Cter in SUMO2) cross-link involves residue Lys623. 633 to 635 serves as a coordination point for S-adenosyl-L-methionine; that stretch reads DVR. Cys657 is a catalytic residue. Residue 838–840 coordinates S-adenosyl-L-methionine; sequence RSW.

It belongs to the class I-like SAM-binding methyltransferase superfamily. C5-methyltransferase family. As to quaternary structure, interacts with CBX4, DNMT1, DNMT3A, SETDB1, UBE2I9, UBL1 and ZHX1. Interacts with SUV39H1 and BAZ2A/TIP5. Interacts with the PRC2/EED-EZH2 complex. Interacts with UHRF1. In terms of processing, sumoylated. Citrullinated by PADI4.

The protein localises to the nucleus. The catalysed reaction is a 2'-deoxycytidine in DNA + S-adenosyl-L-methionine = a 5-methyl-2'-deoxycytidine in DNA + S-adenosyl-L-homocysteine + H(+). With respect to regulation, activated by binding to the regulatory factor DNMT3L. Its function is as follows. Required for genome-wide de novo methylation and is essential for the establishment of DNA methylation patterns during development. DNA methylation is coordinated with methylation of histones. May preferentially methylates nucleosomal DNA within the nucleosome core region. May function as transcriptional co-repressor by associating with CBX4 and independently of DNA methylation. Seems to be involved in gene silencing. In association with DNMT1 and via the recruitment of CTCFL/BORIS, involved in activation of BAG1 gene expression by modulating dimethylation of promoter histone H3 at H3K4 and H3K9. Functions as a transcriptional corepressor by associating with ZHX1. Required for DUX4 silencing in somatic cells. In Mus musculus (Mouse), this protein is DNA (cytosine-5)-methyltransferase 3B (Dnmt3b).